A 65-amino-acid polypeptide reads, in one-letter code: uncharacterized protein (65 aa).

This is an uncharacterized protein from Rhizobium fredii (Sinorhizobium fredii).